The sequence spans 211 residues: MSIADIRTDYTQAKLSELDTDPDPVAQFAKWFGEALRAEVPEPNAMSVSTVAANGRPSSRILLIKDFDQRGFTWFTNYESRKGQELAQNPHAALLFHWIPLEREVRIEGRVERVSSAESEQYFQSRPVKSRLSALASSQSHPVADRTALEAQYAKVEAQYGEHPPRPEHWGGYRLKPDYIEFWQGRASRLHDRIVYSLDKEGKWQRHRLQP.

Substrate contacts are provided by residues 7 to 10 (RTDY) and Lys65. Residues 60–65 (RILLIK), 75–76 (FT), Arg81, and Lys82 contribute to the FMN site. Residues Tyr122, Arg126, and Ser130 each contribute to the substrate site. FMN-binding positions include 139-140 (QS) and Trp183. Substrate is bound at residue 189–191 (RLH). Arg193 provides a ligand contact to FMN.

The protein belongs to the pyridoxamine 5'-phosphate oxidase family. As to quaternary structure, homodimer. It depends on FMN as a cofactor.

The enzyme catalyses pyridoxamine 5'-phosphate + O2 + H2O = pyridoxal 5'-phosphate + H2O2 + NH4(+). It catalyses the reaction pyridoxine 5'-phosphate + O2 = pyridoxal 5'-phosphate + H2O2. It participates in cofactor metabolism; pyridoxal 5'-phosphate salvage; pyridoxal 5'-phosphate from pyridoxamine 5'-phosphate: step 1/1. Its pathway is cofactor metabolism; pyridoxal 5'-phosphate salvage; pyridoxal 5'-phosphate from pyridoxine 5'-phosphate: step 1/1. In terms of biological role, catalyzes the oxidation of either pyridoxine 5'-phosphate (PNP) or pyridoxamine 5'-phosphate (PMP) into pyridoxal 5'-phosphate (PLP). This Janthinobacterium sp. (strain Marseille) (Minibacterium massiliensis) protein is Pyridoxine/pyridoxamine 5'-phosphate oxidase.